The following is a 150-amino-acid chain: Large ribosomal subunit protein bL9 (150 aa).

It belongs to the bacterial ribosomal protein bL9 family.

Functionally, binds to the 23S rRNA. The protein is Large ribosomal subunit protein bL9 of Saccharopolyspora erythraea (strain ATCC 11635 / DSM 40517 / JCM 4748 / NBRC 13426 / NCIMB 8594 / NRRL 2338).